A 343-amino-acid chain; its full sequence is Uroporphyrinogen decarboxylase (343 aa).

Substrate is bound by residues 24 to 28, Phe43, Asp74, Tyr151, Ser206, and His321; that span reads RQAGR.

The protein belongs to the uroporphyrinogen decarboxylase family. Homodimer.

The protein resides in the cytoplasm. It carries out the reaction uroporphyrinogen III + 4 H(+) = coproporphyrinogen III + 4 CO2. It participates in porphyrin-containing compound metabolism; protoporphyrin-IX biosynthesis; coproporphyrinogen-III from 5-aminolevulinate: step 4/4. Functionally, catalyzes the decarboxylation of four acetate groups of uroporphyrinogen-III to yield coproporphyrinogen-III. The protein is Uroporphyrinogen decarboxylase of Thermosynechococcus vestitus (strain NIES-2133 / IAM M-273 / BP-1).